We begin with the raw amino-acid sequence, 146 residues long: uncharacterized protein (146 aa).

A signal peptide spans Met-1–Ala-17. Disordered regions lie at residues Asn-27–Leu-54 and Glu-70–Pro-146. Low complexity predominate over residues Gln-32–Leu-54. A compositionally biased stretch (polar residues) spans Ser-77–His-118.

This is an uncharacterized protein from Escherichia coli (strain K12).